The sequence spans 425 residues: Transmembrane protein 184A (425 aa).

7 helical membrane-spanning segments follow: residues 51-71 (LFLT…TALL), 96-116 (LLFI…LLGG), 133-153 (FVIY…SAIM), 189-209 (TLQF…LQAF), 226-246 (VTLV…LFYF), 261-281 (FLTI…LAIL), and 303-323 (LAAG…SLAL). The segment at 375–425 (QYTQQSTHEAPGPGQGGHPAPSTHPGPASGSGGGKKSRNIEKRMLIPSEDL) is disordered. Over residues 392–402 (HPAPSTHPGPA) the composition is skewed to low complexity.

It belongs to the TMEM184 family. In terms of tissue distribution, expressed in testis, pancreas, parotid salivary gland and mammary gland (at protein level).

The protein resides in the cell membrane. The protein localises to the cytoplasm. It localises to the perinuclear region. It is found in the cytoplasmic vesicle membrane. Its subcellular location is the early endosome membrane. The protein resides in the endosome. The protein localises to the cytoplasmic vesicle. It localises to the secretory vesicle membrane. Acts as a heparin receptor in vascular cells. May be involved in vesicle transport in exocrine cells and Sertoli cells. The polypeptide is Transmembrane protein 184A (Tmem184a) (Mus musculus (Mouse)).